The sequence spans 470 residues: 6-phospho-beta-galactosidase (470 aa).

D-galactose 6-phosphate-binding residues include Gln19, His116, Asn159, Glu160, and Asn297. Glu160 acts as the Proton donor in catalysis. Glu375 (nucleophile) is an active-site residue. Positions 430, 431, 437, and 439 each coordinate D-galactose 6-phosphate.

The protein belongs to the glycosyl hydrolase 1 family.

The enzyme catalyses a 6-phospho-beta-D-galactoside + H2O = D-galactose 6-phosphate + an alcohol. The protein operates within carbohydrate metabolism; lactose degradation; D-galactose 6-phosphate and beta-D-glucose from lactose 6-phosphate: step 1/1. This chain is 6-phospho-beta-galactosidase, found in Staphylococcus aureus (strain MRSA252).